The chain runs to 175 residues: ATP-dependent protease subunit HslV (175 aa).

Thr2 is an active-site residue. Positions 158, 161, and 164 each coordinate Na(+).

Belongs to the peptidase T1B family. HslV subfamily. In terms of assembly, a double ring-shaped homohexamer of HslV is capped on each side by a ring-shaped HslU homohexamer. The assembly of the HslU/HslV complex is dependent on binding of ATP.

The protein resides in the cytoplasm. The enzyme catalyses ATP-dependent cleavage of peptide bonds with broad specificity.. With respect to regulation, allosterically activated by HslU binding. Functionally, protease subunit of a proteasome-like degradation complex believed to be a general protein degrading machinery. The sequence is that of ATP-dependent protease subunit HslV from Haemophilus influenzae (strain PittGG).